The chain runs to 543 residues: Protein SGE1 (543 aa).

Topologically, residues 1–8 (MKSTLSLT) are cytoplasmic. The helical transmembrane segment at 9-29 (LCVISLLLTLFLAALDIVIVV) threads the bilayer. At 30–41 (TLYDTIGIKFHD) the chain is on the extracellular side. Residues 42 to 62 (FGNIGWLVTGYALSNAVFMLL) form a helical membrane-spanning segment. The Cytoplasmic segment spans residues 63 to 79 (WGRLAEILGTKECLMIS). A helical membrane pass occupies residues 80 to 100 (VIVFEIGSLISALSNSMATLI). Over 101 to 103 (SGR) the chain is Extracellular. A helical transmembrane segment spans residues 104–124 (VVAGFGGSGIESLAFVVGTSI). Topologically, residues 125 to 131 (VRENHRG) are cytoplasmic. A helical transmembrane segment spans residues 132–152 (IMITALAISYVIAEGVGPFIG). Topologically, residues 153 to 162 (GAFNEHLSWR) are extracellular. A helical membrane pass occupies residues 163-183 (WCFYINLPIGAFAFIILAFCN). The Cytoplasmic portion of the chain corresponds to 184-227 (TSGEPHQKMWLPSKIKKIMNYDYGELLKASFWKNTFEVLVFKLD). A helical transmembrane segment spans residues 228-248 (MVGIILSSAGFTLLMLGLSFG). Over 249 to 255 (GNNFPWN) the chain is Extracellular. The chain crosses the membrane as a helical span at residues 256-276 (SGIIICFFTVGPILLLLFCAY). The Cytoplasmic segment spans residues 277 to 300 (DFHFLSLSGLHYDNKRIKPLLTWN). Residues 301-321 (IASNCGIFTSSITGFLSCFAY) traverse the membrane as a helical segment. Topologically, residues 322 to 341 (ELQSAYLVQLYQLVFKKKPT) are extracellular. A helical transmembrane segment spans residues 342–362 (LASIHLWELSIPAMIATMAIA). The Cytoplasmic portion of the chain corresponds to 363-373 (YLNSKYGIIKP). A helical membrane pass occupies residues 374 to 394 (AIVFGVLCGIVGSGLFTLING). The Extracellular segment spans residues 395–399 (ELSQS). Residues 400–420 (IGYSILPGIAFGSIFQATLLS) form a helical membrane-spanning segment. Over 421 to 443 (SQVQITSDDPDFQNKFIEVTAFN) the chain is Cytoplasmic. The helical transmembrane segment at 444-464 (SFAKSLGFAFGGNMGAMIFTA) threads the bilayer. Residues 465–508 (SLKNQMRSSQLNIPQFTSVETLLAYSTEHYDGPQSSLSKFINTA) are Extracellular-facing. The helical transmembrane segment at 509 to 529 (IHDVFYCALGCYALSFFFGIF) threads the bilayer. The Cytoplasmic segment spans residues 530–543 (TSSKKTTISAKKQQ).

The protein belongs to the major facilitator superfamily.

The protein localises to the membrane. Functionally, drug export permease. Multi-copy suppressor of loss-of-function mutation of GAL11. Involved specifically in transcription of GAL4-dependent genes. Can link GAL4 with the basal transcription machinery if GAL11 is missing. Confers resistance to 10-N-nonyl acridine orange (NAO) and in general to cationic dyes. In Saccharomyces cerevisiae (strain ATCC 204508 / S288c) (Baker's yeast), this protein is Protein SGE1 (SGE1).